The chain runs to 539 residues: Chaperonin GroEL (539 aa).

ATP contacts are provided by residues 29-32 (TLGP), 86-90 (DGTTT), Gly-413, 477-479 (NAA), and Asp-493.

This sequence belongs to the chaperonin (HSP60) family. In terms of assembly, forms a cylinder of 14 subunits composed of two heptameric rings stacked back-to-back. Interacts with the co-chaperonin GroES.

It is found in the cytoplasm. The catalysed reaction is ATP + H2O + a folded polypeptide = ADP + phosphate + an unfolded polypeptide.. Functionally, together with its co-chaperonin GroES, plays an essential role in assisting protein folding. The GroEL-GroES system forms a nano-cage that allows encapsulation of the non-native substrate proteins and provides a physical environment optimized to promote and accelerate protein folding. This is Chaperonin GroEL from Leifsonia xyli subsp. xyli (strain CTCB07).